The primary structure comprises 307 residues: Fructose-bisphosphate aldolase (307 aa).

Position 49 (Ser-49) interacts with D-glyceraldehyde 3-phosphate. Asp-82 serves as the catalytic Proton donor. The Zn(2+) site is built by His-83, Asp-104, Glu-134, and His-180. Gly-181 provides a ligand contact to dihydroxyacetone phosphate. Residue His-210 coordinates Zn(2+). Residues 211–213 (GAS) and 253–256 (NTDT) contribute to the dihydroxyacetone phosphate site.

This sequence belongs to the class II fructose-bisphosphate aldolase family. In terms of assembly, homodimer. Zn(2+) serves as cofactor.

The catalysed reaction is beta-D-fructose 1,6-bisphosphate = D-glyceraldehyde 3-phosphate + dihydroxyacetone phosphate. The protein operates within carbohydrate degradation; glycolysis; D-glyceraldehyde 3-phosphate and glycerone phosphate from D-glucose: step 4/4. Functionally, catalyzes the aldol condensation of dihydroxyacetone phosphate (DHAP or glycerone-phosphate) with glyceraldehyde 3-phosphate (G3P) to form fructose 1,6-bisphosphate (FBP) in gluconeogenesis and the reverse reaction in glycolysis. The sequence is that of Fructose-bisphosphate aldolase (fba) from Helicobacter pylori (strain J99 / ATCC 700824) (Campylobacter pylori J99).